A 649-amino-acid chain; its full sequence is Threonine--tRNA ligase (649 aa).

In terms of domain architecture, TGS spans 1 to 66; sequence MVQITLPDGS…DNDAQLAIVT (66 aa). Residues 247–538 are catalytic; that stretch reads DHRKIGRELD…LIENHAGAMP (292 aa). Zn(2+) is bound by residues Cys-338, His-389, and His-515.

It belongs to the class-II aminoacyl-tRNA synthetase family. In terms of assembly, homodimer. Requires Zn(2+) as cofactor.

It is found in the cytoplasm. It carries out the reaction tRNA(Thr) + L-threonine + ATP = L-threonyl-tRNA(Thr) + AMP + diphosphate + H(+). In terms of biological role, catalyzes the attachment of threonine to tRNA(Thr) in a two-step reaction: L-threonine is first activated by ATP to form Thr-AMP and then transferred to the acceptor end of tRNA(Thr). Also edits incorrectly charged L-seryl-tRNA(Thr). The protein is Threonine--tRNA ligase of Bordetella bronchiseptica (strain ATCC BAA-588 / NCTC 13252 / RB50) (Alcaligenes bronchisepticus).